A 115-amino-acid chain; its full sequence is Aspartate 1-decarboxylase (115 aa).

The Schiff-base intermediate with substrate; via pyruvic acid role is filled by S25. S25 is subject to Pyruvic acid (Ser). Substrate is bound at residue T57. The Proton donor role is filled by Y58. Residue 73 to 75 (GPA) participates in substrate binding.

The protein belongs to the PanD family. Heterooctamer of four alpha and four beta subunits. It depends on pyruvate as a cofactor. Is synthesized initially as an inactive proenzyme, which is activated by self-cleavage at a specific serine bond to produce a beta-subunit with a hydroxyl group at its C-terminus and an alpha-subunit with a pyruvoyl group at its N-terminus.

It is found in the cytoplasm. The enzyme catalyses L-aspartate + H(+) = beta-alanine + CO2. It participates in cofactor biosynthesis; (R)-pantothenate biosynthesis; beta-alanine from L-aspartate: step 1/1. In terms of biological role, catalyzes the pyruvoyl-dependent decarboxylation of aspartate to produce beta-alanine. The chain is Aspartate 1-decarboxylase from Cytophaga hutchinsonii (strain ATCC 33406 / DSM 1761 / CIP 103989 / NBRC 15051 / NCIMB 9469 / D465).